We begin with the raw amino-acid sequence, 396 residues long: Interleukin enhancer-binding factor 2 homolog (396 aa).

The region spanning 22–379 is the DZF domain; sequence KTFVPRHPFD…KKEGDLEEDI (358 aa). A disordered region spans residues 367-396; that stretch reads PTDKKEGDLEEDIDMIENENEEEGSDDGAE. Over residues 374–396 the composition is skewed to acidic residues; the sequence is DLEEDIDMIENENEEEGSDDGAE.

It localises to the nucleus. Functionally, may regulate transcription of undefined genes. The protein is Interleukin enhancer-binding factor 2 homolog of Drosophila melanogaster (Fruit fly).